Reading from the N-terminus, the 201-residue chain is Endoribonuclease YbeY (201 aa).

His-120, His-124, and His-130 together coordinate Zn(2+). A disordered region spans residues 151-201 (DGADGADGADGARGAADGAADGGEGRRGDQGRRGDQGRGGGAGEPPAAPAR). Over residues 173–186 (GEGRRGDQGRRGDQ) the composition is skewed to basic and acidic residues.

The protein belongs to the endoribonuclease YbeY family. Zn(2+) is required as a cofactor.

It localises to the cytoplasm. Its function is as follows. Single strand-specific metallo-endoribonuclease involved in late-stage 70S ribosome quality control and in maturation of the 3' terminus of the 16S rRNA. The polypeptide is Endoribonuclease YbeY (Frankia casuarinae (strain DSM 45818 / CECT 9043 / HFP020203 / CcI3)).